Here is a 438-residue protein sequence, read N- to C-terminus: 3-phosphoshikimate 1-carboxyvinyltransferase (438 aa).

3-phosphoshikimate-binding residues include Lys-20, Ser-21, and Arg-25. Lys-20 provides a ligand contact to phosphoenolpyruvate. The phosphoenolpyruvate site is built by Gly-90 and Arg-118. 3-phosphoshikimate is bound by residues Ser-163, Ser-164, Gln-165, Ser-191, Asp-320, and Lys-347. A phosphoenolpyruvate-binding site is contributed by Gln-165. Asp-320 acts as the Proton acceptor in catalysis. Phosphoenolpyruvate is bound by residues Arg-351 and Arg-392.

It belongs to the EPSP synthase family. In terms of assembly, monomer.

It localises to the cytoplasm. The catalysed reaction is 3-phosphoshikimate + phosphoenolpyruvate = 5-O-(1-carboxyvinyl)-3-phosphoshikimate + phosphate. The protein operates within metabolic intermediate biosynthesis; chorismate biosynthesis. Its function is as follows. Catalyzes the transfer of the enolpyruvyl moiety of phosphoenolpyruvate (PEP) to the 5-hydroxyl of shikimate-3-phosphate (S3P) to produce enolpyruvyl shikimate-3-phosphate and inorganic phosphate. The chain is 3-phosphoshikimate 1-carboxyvinyltransferase from Natronomonas pharaonis (strain ATCC 35678 / DSM 2160 / CIP 103997 / JCM 8858 / NBRC 14720 / NCIMB 2260 / Gabara) (Halobacterium pharaonis).